The primary structure comprises 555 residues: Formate--tetrahydrofolate ligase (555 aa).

Position 64–71 (64–71 (TPAGEGKT)) interacts with ATP.

Belongs to the formate--tetrahydrofolate ligase family.

The catalysed reaction is (6S)-5,6,7,8-tetrahydrofolate + formate + ATP = (6R)-10-formyltetrahydrofolate + ADP + phosphate. Its pathway is one-carbon metabolism; tetrahydrofolate interconversion. In Allorhizobium ampelinum (strain ATCC BAA-846 / DSM 112012 / S4) (Agrobacterium vitis (strain S4)), this protein is Formate--tetrahydrofolate ligase.